A 127-amino-acid polypeptide reads, in one-letter code: DNA-directed RNA polymerases I, II, and III subunit RPABC2 (127 aa).

Residues 1-34 (MSDNEDNFDGDDFDDVEEDEGLDDLENAEEEGQE) show a composition bias toward acidic residues. A disordered region spans residues 1–53 (MSDNEDNFDGDDFDDVEEDEGLDDLENAEEEGQENVEILPSGERPQANQKRIT). N-acetylserine is present on Ser-2. Phosphoserine; by CK2 is present on Ser-2.

It belongs to the archaeal Rpo6/eukaryotic RPB6 RNA polymerase subunit family. As to quaternary structure, component of the RNA polymerase I (Pol I), RNA polymerase II (Pol II) and RNA polymerase III (Pol III) complexes consisting of at least 13, 12 and 17 subunits, respectively. Pol I complex consists of a ten-subunit catalytic core composed of POLR1A/RPA1, POLR1B/RPA2, POLR1C/RPAC1, POLR1D/RPAC2, POLR1H/RPA12, POLR2E/RPABC1, POLR2F/RPABC2, POLR2H/RPABC3, POLR2K/RPABC4 and POLR2L/RPABC5; a mobile stalk subunit POLR1F/RPA43 protruding from the core and additional subunits homologous to general transcription factors POLR1E/RPA49 and POLR1G/RPA34. Part of Pol I pre-initiation complex (PIC), in which Pol I core assembles with RRN3 and promoter-bound UTBF and SL1/TIF-IB complex. Pol II complex contains a ten-subunit catalytic core composed of POLR2A/RPB1, POLR2B/RPB2, POLR2C/RPB3, POLR2I/RPB9, POLR2J/RPB11, POLR2E/RPABC1, POLR2F/RPABC2, POLR2H/RPABC3, POLR2K/RPABC4 and POLR2L/RPABC5 and a mobile stalk composed of two subunits POLR2D/RPB4 and POLR2G/RPB7. Part of Pol II(G) complex, in which Pol II core associates with an additional subunit POLR2M; unlike conventional Pol II, Pol II(G) functions as a transcriptional repressor. Part of TBP-based Pol II pre-initiation complex (PIC), in which Pol II core assembles with general transcription factors and other specific initiation factors including GTF2E1, GTF2E2, GTF2F1, GTF2F2, TCEA1, ERCC2, ERCC3, GTF2H2, GTF2H3, GTF2H4, GTF2H5, GTF2A1, GTF2A2, GTF2B and TBP; this large multi-subunit PIC complex mediates DNA unwinding and targets Pol II core to the transcription start site where the first phosphodiester bond forms. Pol III complex consists of a ten-subunit catalytic core composed of POLR3A/RPC1, POLR3B/RPC2, POLR1C/RPAC1, POLR1D/RPAC2, POLR3K/RPC10, POLR2E/RPABC1, POLR2F/RPABC2, POLR2H/RPABC3, POLR2K/RPABC4 and POLR2L/RPABC5; a mobile stalk composed of two subunits POLR3H/RPC8 and CRCP/RPC9, protruding from the core and functioning primarily in transcription initiation; and additional subunits homologous to general transcription factors of the RNA polymerase II machinery, POLR3C/RPC3-POLR3F/RPC6-POLR3G/RPC7 heterotrimer required for transcription initiation and POLR3D/RPC4-POLR3E/RPC5 heterodimer involved in both transcription initiation and termination.

Its subcellular location is the nucleus. The protein resides in the nucleolus. Functionally, DNA-dependent RNA polymerase catalyzes the transcription of DNA into RNA using the four ribonucleoside triphosphates as substrates. Common component of RNA polymerases I, II, and III which synthesize ribosomal RNA precursors, mRNA precursors and many functional non-coding RNAs, and small RNAs, such as 5S rRNA and tRNAs, respectively. Pol II is the central component of the basal RNA polymerase II transcription machinery. Pols are composed of mobile elements that move relative to each other. In Pol II, POLR2F/RPABC2 is part of the clamp element and together with parts of POLR2A/RPB1 and POLR2B/RPB2 forms a pocket to which the POLR2D/RPB4-POLR2G/RPB7 subcomplex binds. In Homo sapiens (Human), this protein is DNA-directed RNA polymerases I, II, and III subunit RPABC2.